The following is a 363-amino-acid chain: dTDP-L-rhamnose 4-epimerase (363 aa).

NAD(+) is bound by residues 18 to 24 (GGAGFIG), 68 to 69 (DV), and 90 to 94 (LAAET). Substrate is bound by residues S136 and Y191. NAD(+)-binding residues include Y191 and K195. The Proton acceptor role is filled by Y191. Positions 220 and 259 each coordinate substrate.

This sequence belongs to the NAD(P)-dependent epimerase/dehydratase family. NAD(+) is required as a cofactor.

It carries out the reaction dTDP-6-deoxy-beta-L-talose = dTDP-beta-L-rhamnose. The protein operates within bacterial outer membrane biogenesis; LPS O-antigen biosynthesis. Catalyzes the interconvertion of dTDP-6-deoxy-L-talose and dTDP-L-rhamnose. The equilibrium is strongly toward dTDP-L-rhamnose. The chain is dTDP-L-rhamnose 4-epimerase (wbiB) from Burkholderia thailandensis (strain ATCC 700388 / DSM 13276 / CCUG 48851 / CIP 106301 / E264).